We begin with the raw amino-acid sequence, 348 residues long: MTYNIVALPGDGIGPEILNGSLSLLEIISNKYNFNYQIEHHEFGGASIDTFGEPLTEKTLNACKRADAILLGAIGGPKWTDPNNRPEQGLLKLRKSLNLFVNIRPTTVVKGASSLSPLKEERVEGTDLVIVRELTSGIYFGEPRHFNNHEALDSLTYTREEIERIVHVAFKLAASRRGKLTSVDKENVLASSKLWRKVVNEVSQLYPEVTVNHLFVDACSMHLITNPKQFDVIVCENLFGDILSDEASVIPGSLGLSPSASFSNDGPRLYEPIHGSAPDIAGKNVANPFGMILSLAMCLRESLNQPDAADELEQHIYSMIEHGQTTADLGGKLNTTDIFEILSQKLNH.

NAD(+) is bound at residue 76–87 (GPKWTDPNNRPE). Substrate-binding residues include R94, R104, R132, and D217. 3 residues coordinate Mg(2+): D217, D241, and D245. 275 to 287 (GSAPDIAGKNVAN) contacts NAD(+).

It belongs to the isocitrate and isopropylmalate dehydrogenases family. LeuB type 1 subfamily. In terms of assembly, homodimer. Mg(2+) is required as a cofactor. It depends on Mn(2+) as a cofactor.

Its subcellular location is the cytoplasm. The enzyme catalyses (2R,3S)-3-isopropylmalate + NAD(+) = 4-methyl-2-oxopentanoate + CO2 + NADH. The protein operates within amino-acid biosynthesis; L-leucine biosynthesis; L-leucine from 3-methyl-2-oxobutanoate: step 3/4. In terms of biological role, catalyzes the oxidation of 3-carboxy-2-hydroxy-4-methylpentanoate (3-isopropylmalate) to 3-carboxy-4-methyl-2-oxopentanoate. The product decarboxylates to 4-methyl-2 oxopentanoate. In Staphylococcus aureus (strain NCTC 8325 / PS 47), this protein is 3-isopropylmalate dehydrogenase.